Consider the following 232-residue polypeptide: Orotate phosphoribosyltransferase (232 aa).

Residues Arg107, Lys108, Lys111, His113, and 133–141 (EDLTTAGGS) contribute to the 5-phospho-alpha-D-ribose 1-diphosphate site. An orotate-binding site is contributed by Thr137.

This sequence belongs to the purine/pyrimidine phosphoribosyltransferase family. PyrE subfamily. Homodimer. It depends on Mg(2+) as a cofactor.

It carries out the reaction orotidine 5'-phosphate + diphosphate = orotate + 5-phospho-alpha-D-ribose 1-diphosphate. It participates in pyrimidine metabolism; UMP biosynthesis via de novo pathway; UMP from orotate: step 1/2. Catalyzes the transfer of a ribosyl phosphate group from 5-phosphoribose 1-diphosphate to orotate, leading to the formation of orotidine monophosphate (OMP). The polypeptide is Orotate phosphoribosyltransferase (Rhizobium rhizogenes (strain K84 / ATCC BAA-868) (Agrobacterium radiobacter)).